The chain runs to 827 residues: DNA ligase (827 aa).

Residues 45–49, 94–95, and Glu128 contribute to the NAD(+) site; these read DAAYD and SL. Lys130 (N6-AMP-lysine intermediate) is an active-site residue. The NAD(+) site is built by Arg151, Glu188, Lys304, and Lys328. Residues Cys451, Cys454, Cys475, and Cys481 each contribute to the Zn(2+) site. Positions 748–827 constitute a BRCT domain; that stretch reads AAAAAFSGRT…AEWLAMVEAA (80 aa).

The protein belongs to the NAD-dependent DNA ligase family. LigA subfamily. Mg(2+) serves as cofactor. The cofactor is Mn(2+).

It catalyses the reaction NAD(+) + (deoxyribonucleotide)n-3'-hydroxyl + 5'-phospho-(deoxyribonucleotide)m = (deoxyribonucleotide)n+m + AMP + beta-nicotinamide D-nucleotide.. DNA ligase that catalyzes the formation of phosphodiester linkages between 5'-phosphoryl and 3'-hydroxyl groups in double-stranded DNA using NAD as a coenzyme and as the energy source for the reaction. It is essential for DNA replication and repair of damaged DNA. This chain is DNA ligase, found in Methylobacterium sp. (strain 4-46).